Consider the following 399-residue polypeptide: 4-hydroxy-3-methylbut-2-enyl diphosphate reductase (399 aa).

Position 66 (C66) interacts with [4Fe-4S] cluster. H96 lines the (2E)-4-hydroxy-3-methylbut-2-enyl diphosphate pocket. Residue H96 participates in dimethylallyl diphosphate binding. Position 96 (H96) interacts with isopentenyl diphosphate. C157 provides a ligand contact to [4Fe-4S] cluster. (2E)-4-hydroxy-3-methylbut-2-enyl diphosphate is bound at residue H185. H185 is a binding site for dimethylallyl diphosphate. Residue H185 participates in isopentenyl diphosphate binding. E187 serves as the catalytic Proton donor. T250 is a (2E)-4-hydroxy-3-methylbut-2-enyl diphosphate binding site. C288 is a [4Fe-4S] cluster binding site. Residues S317, S318, N319, and S379 each coordinate (2E)-4-hydroxy-3-methylbut-2-enyl diphosphate. Dimethylallyl diphosphate-binding residues include S317, S318, N319, and S379. Isopentenyl diphosphate is bound by residues S317, S318, N319, and S379.

The protein belongs to the IspH family. It depends on [4Fe-4S] cluster as a cofactor.

It catalyses the reaction isopentenyl diphosphate + 2 oxidized [2Fe-2S]-[ferredoxin] + H2O = (2E)-4-hydroxy-3-methylbut-2-enyl diphosphate + 2 reduced [2Fe-2S]-[ferredoxin] + 2 H(+). The catalysed reaction is dimethylallyl diphosphate + 2 oxidized [2Fe-2S]-[ferredoxin] + H2O = (2E)-4-hydroxy-3-methylbut-2-enyl diphosphate + 2 reduced [2Fe-2S]-[ferredoxin] + 2 H(+). Its pathway is isoprenoid biosynthesis; dimethylallyl diphosphate biosynthesis; dimethylallyl diphosphate from (2E)-4-hydroxy-3-methylbutenyl diphosphate: step 1/1. It functions in the pathway isoprenoid biosynthesis; isopentenyl diphosphate biosynthesis via DXP pathway; isopentenyl diphosphate from 1-deoxy-D-xylulose 5-phosphate: step 6/6. Its function is as follows. Catalyzes the conversion of 1-hydroxy-2-methyl-2-(E)-butenyl 4-diphosphate (HMBPP) into a mixture of isopentenyl diphosphate (IPP) and dimethylallyl diphosphate (DMAPP). Acts in the terminal step of the DOXP/MEP pathway for isoprenoid precursor biosynthesis. The polypeptide is 4-hydroxy-3-methylbut-2-enyl diphosphate reductase (Synechococcus sp. (strain WH7803)).